Reading from the N-terminus, the 227-residue chain is MEQPAPQPAYVLHSRAYKETSALVDFLTPQGRVRAVLRRARGKGGSLVRPFVPLEVELRGRGELKNVGRLDSTGIAAWLHGDALFSGLYLNELLMRLLPAEAPYPALFEHYTLTLQALAAGRPLEPLLRSFEWRLLDELGYAFSLSQDVNDAAVVADGLYRLRVDAGLERVELFQPGLFKGSELLALAEADWDAPGALLAAKRLMRQALAVHLGTKPLVSRELFRKR.

Belongs to the RecO family.

Functionally, involved in DNA repair and RecF pathway recombination. This Pseudomonas entomophila (strain L48) protein is DNA repair protein RecO.